The primary structure comprises 107 residues: ATP-dependent Clp protease adapter protein ClpS (107 aa).

It belongs to the ClpS family. Binds to the N-terminal domain of the chaperone ClpA.

Its function is as follows. Involved in the modulation of the specificity of the ClpAP-mediated ATP-dependent protein degradation. This chain is ATP-dependent Clp protease adapter protein ClpS, found in Acinetobacter baylyi (strain ATCC 33305 / BD413 / ADP1).